Reading from the N-terminus, the 147-residue chain is MVHLTPEEKTAVNALWGKVNVDAVGGEALGRLLVVYPWTQRFFESFGDLSSPDAVMGNPKVKAHGKKVLGAFSDGLAHLDNLKGTFSQLSELHCDKLHVDPENFRLLGNVLVCVLARNFGKEFTPQVQAAYQKVVAGVANALAHKYH.

Residues 3-147 enclose the Globin domain; sequence HLTPEEKTAV…VANALAHKYH (145 aa). The residue at position 51 (Ser-51) is a Phosphoserine. Residues His-64 and His-93 each coordinate heme b.

This sequence belongs to the globin family. As to quaternary structure, heterotetramer of two delta chains and two alpha chains. As to expression, red blood cells.

The chain is Hemoglobin subunit delta (HBD) from Gorilla gorilla gorilla (Western lowland gorilla).